Here is a 29-residue protein sequence, read N- to C-terminus: NADP phosphatase 1 (29 aa).

Homodimer.

Its subcellular location is the cytoplasm. This Arthrobacter sp. (strain KM) protein is NADP phosphatase 1.